The chain runs to 273 residues: 4-hydroxy-tetrahydrodipicolinate reductase (273 aa).

NAD(+) is bound at residue 11–16 (GAGGRM). R37 contributes to the NADP(+) binding site. NAD(+) contacts are provided by residues 100–102 (GTT) and 124–127 (AANY). The active-site Proton donor/acceptor is the H157. (S)-2,3,4,5-tetrahydrodipicolinate is bound at residue H158. Residue K161 is the Proton donor of the active site. Position 167 to 168 (167 to 168 (GT)) interacts with (S)-2,3,4,5-tetrahydrodipicolinate.

It belongs to the DapB family.

Its subcellular location is the cytoplasm. The enzyme catalyses (S)-2,3,4,5-tetrahydrodipicolinate + NAD(+) + H2O = (2S,4S)-4-hydroxy-2,3,4,5-tetrahydrodipicolinate + NADH + H(+). It carries out the reaction (S)-2,3,4,5-tetrahydrodipicolinate + NADP(+) + H2O = (2S,4S)-4-hydroxy-2,3,4,5-tetrahydrodipicolinate + NADPH + H(+). Its pathway is amino-acid biosynthesis; L-lysine biosynthesis via DAP pathway; (S)-tetrahydrodipicolinate from L-aspartate: step 4/4. Catalyzes the conversion of 4-hydroxy-tetrahydrodipicolinate (HTPA) to tetrahydrodipicolinate. The polypeptide is 4-hydroxy-tetrahydrodipicolinate reductase (Acinetobacter baumannii (strain AB307-0294)).